The sequence spans 259 residues: UPF0246 protein Aave_1172 (259 aa).

This sequence belongs to the UPF0246 family.

This chain is UPF0246 protein Aave_1172, found in Paracidovorax citrulli (strain AAC00-1) (Acidovorax citrulli).